Reading from the N-terminus, the 1116-residue chain is MSGDTAFYELGACTNFSFLEGAAPAEEMVVFAKKARLAGLGIADRNSVAGVVRAHAKAKMENYPFQPGARLVFADGTPDVLAYPRNRRGWGHLCRLLSAGNLRSKKGDCTLHLADLLEWQEELLLIVMPDRVRPEPESLKPLLGKLQEHAGNRLYLGLAPRYDGFDRHDFAVLATVARKAGIGLLATNDALYHDPDYRPLADVVTAIREHVPVAGAGFLLQKNAERHLKSPREMARLFSDYPEAIANTQKFFRHLAFSLDELRHQYPDENAGGETPAESLRRLVSEGAAERYPEGVPEKVQRQIEYELELINDKKYEPYFLTVHKLVKFARSEKILCQGRGSAANSSVCFCLGITDVDPQKFTLLFDRFLSKDRDEPPDIDVDFEHERREEVIQYIYRTYGKEHAGLAAAVISYRSRSAGREVAKAFGFSEDVQSALVSSIWGWGNSPFTEEQARGAGLDAADPSTRRVLAYASLLMNYPRHLSQHVGGFVITRDRLDEVVPIMNTAMPDRYMIEWDKDDLDELKILKVDVLALGMLTCLAKGFKLLEAHYGEPITLAEIYQDHQPAVYDMICRADTVGVFQIESRAQMSMLPRLQPREMYDLVIEVAIVRPGPIQGNMVHPYLKRREGQRKGEKVKYPSPELKAVLERTLGVPLFQEQAMQIAITAAGFSPSEADRLRRAMATFKRTGTIHTFERKMVEGMVANGYEREFAERCFNQIKGFGEYGFPESHAASFASLVYASAWLKTYYPDIFCAALLNAQPMGFYAPAQLVRDAREHGVKVLPVDINHSDWDALLEGEGQFRKESVDPRHADMREVIKTRKAVRLGFRLVKGLKQADMGALVACRGEGYRSVHDLWFRSGLSRSVLERLADADAFRSLGLDRRAALWAVKALDEQSAVERLPLFEGAGSLDLRAEPKVALPEMPAGEQVIHDYRTLTLSLKAHPVSFMREDFSRTGILRSRDLAATATGKWVTVAGLVLVRQRPGSANGVIFMTIEDETGIANIIVWEKTFRKYRPQVMGSRLVKIRGRLQNQSGVIHVVADHLEDITPMLGLLRREARRFGANDRADGALRPSGDAREKRKLRQLRLGLPGGAEPEGEAAAQVAEAMPKGRNFH.

It belongs to the DNA polymerase type-C family. DnaE2 subfamily.

The protein resides in the cytoplasm. It carries out the reaction DNA(n) + a 2'-deoxyribonucleoside 5'-triphosphate = DNA(n+1) + diphosphate. DNA polymerase involved in damage-induced mutagenesis and translesion synthesis (TLS). It is not the major replicative DNA polymerase. This is Error-prone DNA polymerase from Sinorhizobium medicae (strain WSM419) (Ensifer medicae).